A 294-amino-acid polypeptide reads, in one-letter code: Protein C3orf33 (294 aa).

An N-acetylalanine modification is found at alanine 2. Residues 40 to 56 (ISTGMAIAGIMLLLRSI) traverse the membrane as a helical segment.

In terms of tissue distribution, highly expressed in ileocecal tissue and endometrium.

It localises to the membrane. The protein resides in the secreted. In terms of biological role, secreted protein may play a role in transcription regulation via the MAPK3/MAPK1 pathway through an unidentified receptor on the plasma membrane. This is Protein C3orf33 (C3orf33) from Homo sapiens (Human).